The following is a 306-amino-acid chain: Tyrosine recombinase EUBREC_2677 (306 aa).

One can recognise a Core-binding (CB) domain in the interval 2-84 (NNLQTHISSY…SIKAFFHYLE (83 aa)). Residues 106–296 (ILPKTIPLYI…AVSKQKDILI (191 aa)) enclose the Tyr recombinase domain. Residues Arg155, Lys179, His248, Arg251, and His274 contribute to the active site. Catalysis depends on Tyr283, which acts as the O-(3'-phospho-DNA)-tyrosine intermediate.

It belongs to the 'phage' integrase family.

The protein localises to the cytoplasm. Its function is as follows. Site-specific tyrosine recombinase, which acts by catalyzing the cutting and rejoining of the recombining DNA molecules. This is Tyrosine recombinase EUBREC_2677 from Agathobacter rectalis (strain ATCC 33656 / DSM 3377 / JCM 17463 / KCTC 5835 / VPI 0990) (Eubacterium rectale).